Here is a 248-residue protein sequence, read N- to C-terminus: Triosephosphate isomerase B (248 aa).

The substrate site is built by N11 and K13. H95 acts as the Electrophile in catalysis. E165 (proton acceptor) is an active-site residue.

Belongs to the triosephosphate isomerase family. As to quaternary structure, homodimer.

The protein localises to the cytoplasm. The enzyme catalyses dihydroxyacetone phosphate = methylglyoxal + phosphate. It carries out the reaction D-glyceraldehyde 3-phosphate = dihydroxyacetone phosphate. It participates in carbohydrate degradation; glycolysis; D-glyceraldehyde 3-phosphate from glycerone phosphate: step 1/1. Its pathway is carbohydrate biosynthesis; gluconeogenesis. Triosephosphate isomerase is an extremely efficient metabolic enzyme that catalyzes the interconversion between dihydroxyacetone phosphate (DHAP) and D-glyceraldehyde-3-phosphate (G3P) in glycolysis and gluconeogenesis. In terms of biological role, it is also responsible for the non-negligible production of methylglyoxal a reactive cytotoxic side-product that modifies and can alter proteins, DNA and lipids. In Danio rerio (Zebrafish), this protein is Triosephosphate isomerase B (tpi1b).